The following is a 255-amino-acid chain: Proteasome subunit alpha type-3 (255 aa).

Residue S2 is modified to N-acetylserine. K57, K206, and K230 each carry N6-acetyllysine. S243 and S250 each carry phosphoserine.

It belongs to the peptidase T1A family. As to quaternary structure, the 26S proteasome consists of a 20S proteasome core and two 19S regulatory subunits. The 20S proteasome core is a barrel-shaped complex made of 28 subunits that are arranged in four stacked rings. The two outer rings are each formed by seven alpha subunits, and the two inner rings are formed by seven beta subunits. The proteolytic activity is exerted by three beta-subunits PSMB5, PSMB6 and PSMB7. Interacts with AURKB. Interacts with CDKN1A. Interacts with MDM2 and RB1. Interacts with the C-terminus of TBXA2R isoform 2. Interacts with DNAJB2.

The protein localises to the cytoplasm. Its subcellular location is the nucleus. Its function is as follows. Component of the 20S core proteasome complex involved in the proteolytic degradation of most intracellular proteins. This complex plays numerous essential roles within the cell by associating with different regulatory particles. Associated with two 19S regulatory particles, forms the 26S proteasome and thus participates in the ATP-dependent degradation of ubiquitinated proteins. The 26S proteasome plays a key role in the maintenance of protein homeostasis by removing misfolded or damaged proteins that could impair cellular functions, and by removing proteins whose functions are no longer required. Associated with the PA200 or PA28, the 20S proteasome mediates ubiquitin-independent protein degradation. This type of proteolysis is required in several pathways including spermatogenesis (20S-PA200 complex) or generation of a subset of MHC class I-presented antigenic peptides (20S-PA28 complex). Binds to the C-terminus of CDKN1A and thereby mediates its degradation. Negatively regulates the membrane trafficking of the cell-surface thromboxane A2 receptor (TBXA2R) isoform 2. This is Proteasome subunit alpha type-3 (PSMA3) from Bos taurus (Bovine).